A 181-amino-acid chain; its full sequence is Large ribosomal subunit protein uL6 (181 aa).

This sequence belongs to the universal ribosomal protein uL6 family. In terms of assembly, part of the 50S ribosomal subunit.

Functionally, this protein binds to the 23S rRNA, and is important in its secondary structure. It is located near the subunit interface in the base of the L7/L12 stalk, and near the tRNA binding site of the peptidyltransferase center. The protein is Large ribosomal subunit protein uL6 of Hydrogenobaculum sp. (strain Y04AAS1).